The following is a 341-amino-acid chain: Cyclic GMP-AMP synthase (341 aa).

An ATP-binding site is contributed by Ser-56. Active-site residues include Asp-71 and Asp-73. Asp-73 serves as a coordination point for Mg(2+). Position 109 (Asn-109) interacts with ATP. Residue Asp-123 is part of the active site. Asp-123 contacts Mg(2+). ATP is bound by residues Leu-192 and Asp-238.

It belongs to the CD-NTase family. B04 subfamily. As to quaternary structure, monomer. Mg(2+) serves as cofactor.

The catalysed reaction is GTP + ATP = 3',3'-cGAMP + 2 diphosphate. Its function is as follows. Cyclic nucleotide synthase (second messenger synthase) of a CBASS antivirus system. CBASS (cyclic oligonucleotide-based antiphage signaling system) provides immunity against bacteriophage. The CD-NTase protein synthesizes cyclic nucleotides in response to infection; these serve as specific second messenger signals. The signals activate a diverse range of effectors, leading to bacterial cell death and thus abortive phage infection. A type II-A(GA) CBASS system. Functionally, catalyzes the synthesis of 3'3'-cyclic GMP-AMP (3'3'-cGAMP) from GTP and ATP, a second messenger in cell signal transduction. May make another product. Controls the activity of the CBASS cGAMP-activated phospholipase effector protein. This chain is Cyclic GMP-AMP synthase, found in Bacteroides fragilis.